The chain runs to 143 residues: Large ribosomal subunit protein uL13 (143 aa).

The protein belongs to the universal ribosomal protein uL13 family. In terms of assembly, part of the 50S ribosomal subunit.

Functionally, this protein is one of the early assembly proteins of the 50S ribosomal subunit, although it is not seen to bind rRNA by itself. It is important during the early stages of 50S assembly. The protein is Large ribosomal subunit protein uL13 of Methanosarcina acetivorans (strain ATCC 35395 / DSM 2834 / JCM 12185 / C2A).